The chain runs to 159 residues: Putative ribosomal RNA large subunit methyltransferase H (159 aa).

S-adenosyl-L-methionine is bound by residues L76, G108, and 127–132 (FSKMTF).

It belongs to the RNA methyltransferase RlmH family.

The protein resides in the cytoplasm. It catalyses the reaction pseudouridine(1915) in 23S rRNA + S-adenosyl-L-methionine = N(3)-methylpseudouridine(1915) in 23S rRNA + S-adenosyl-L-homocysteine + H(+). Specifically methylates the pseudouridine at position 1915 (m3Psi1915) in 23S rRNA. The chain is Putative ribosomal RNA large subunit methyltransferase H from Methanococcus maripaludis (strain C5 / ATCC BAA-1333).